The primary structure comprises 1413 residues: Zinc finger SWIM domain-containing protein 8 (1413 aa).

Phosphoserine occurs at positions 36, 48, and 53. Residues 45–65 (RKQSAGPNSPTGGGGGGGSGG) are disordered. Over residues 55–65 (TGGGGGGGSGG) the composition is skewed to gly residues. The segment at 172 to 208 (YNVAVMFDRCRVTSCSCTCGAGAKWCTHVVALCLFRI) adopts an SWIM-type zinc-finger fold. The segment at 600–817 (ESQTHKPQTL…ESHAPHVPNQ (218 aa)) is disordered. Positions 604–625 (HKPQTLSSFYSSSRPATASQRS) are enriched in polar residues. Over residues 704–715 (SRGGYNGRGWGS) the composition is skewed to gly residues. Thr-724 bears the Phosphothreonine mark. Residues 729–744 (IDSSAPETTSDSSPTL) are compositionally biased toward polar residues. Phosphoserine is present on residues Ser-738, Ser-741, and Ser-745. Over residues 759 to 794 (GRGQDSDSISSSSSDSLGSSSSSGSRRASASGGARA) the composition is skewed to low complexity. Over residues 795-811 (KTVEVGRYKGRRPESHA) the composition is skewed to basic and acidic residues. Residues Ser-852 and Ser-1412 each carry the phosphoserine modification.

It belongs to the ZSWIM8 family. As to quaternary structure, component of the SCF-like E3 ubiquitin-protein ligase complex which contains CUL3, RBX1, ELOB, ELOC and ZSWIM8. Interacts with DAB1.

Its subcellular location is the cytoplasm. The protein localises to the cytosol. Its pathway is protein modification; protein ubiquitination. Functionally, substrate recognition component of a SCF-like E3 ubiquitin-protein ligase complex that promotes target-directed microRNA degradation (TDMD), a process that mediates degradation of microRNAs (miRNAs). The SCF-like E3 ubiquitin-protein ligase complex acts by catalyzing ubiquitination and subsequent degradation of AGO proteins (AGO1, AGO2, AGO3 and/or AGO4), thereby exposing miRNAs for degradation. Specifically recognizes and binds AGO proteins when they are engaged with a TDMD target. May also acts as a regulator of axon guidance: specifically recognizes misfolded ROBO3 and promotes its ubiquitination and subsequent degradation. Plays an essential role for proper embryonic development of heart and lung. Controls protein quality of DAB1, a key signal molecule for brain development, thus protecting its signaling strength. Mechanistically, recognizes intrinsically disordered regions of DAB1 and eliminates misfolded DAB1 that cannot be properly phosphorylated. The chain is Zinc finger SWIM domain-containing protein 8 from Bos taurus (Bovine).